Here is a 237-residue protein sequence, read N- to C-terminus: Fibroblast growth factor 3 (237 aa).

Residues 1–21 (MVIIWILLLSFISCGPQVSWA) form the signal peptide. Asparagine 83 carries an N-linked (GlcNAc...) asparagine glycan.

This sequence belongs to the heparin-binding growth factors family.

Plays an important role in the regulation of embryonic development, cell proliferation, and cell differentiation. This Xenopus laevis (African clawed frog) protein is Fibroblast growth factor 3 (fgf3).